Here is a 396-residue protein sequence, read N- to C-terminus: Exodeoxyribonuclease 7 large subunit (396 aa).

It belongs to the XseA family. As to quaternary structure, heterooligomer composed of large and small subunits.

It is found in the cytoplasm. The enzyme catalyses Exonucleolytic cleavage in either 5'- to 3'- or 3'- to 5'-direction to yield nucleoside 5'-phosphates.. In terms of biological role, bidirectionally degrades single-stranded DNA into large acid-insoluble oligonucleotides, which are then degraded further into small acid-soluble oligonucleotides. The protein is Exodeoxyribonuclease 7 large subunit of Clostridium tetani (strain Massachusetts / E88).